The following is a 198-amino-acid chain: DNA polymerase zeta subunit 2 (198 aa).

In terms of domain architecture, HORMA spans 4-196 (EIKADIIVEA…DLGLKMDVLI (193 aa)).

This sequence belongs to the MAD2 family. Accessory subunit of the zeta DNA polymerase complex, which consists of the catalytic component PolZ1/DNApol-zeta and PolZ2/Rev7. Interacts with the apurinic/apyrimidinic (AP) endonuclease Rrp1 (via the N-terminus).

In terms of biological role, as the accessory component of the DNA polymerase zeta complex, involved in translesion DNA synthesis (TLS) and various DNA repair mechanisms. Promotes the apurinic/apyrimidinic (AP) endonuclease activity of Rrp1 and is therefore likely to be involved in the base excision repair (BER) pathway responsible for repair of DNA lesions. It does not appear to influence the synthesis activity of the catalytic component Dmpol-zeta. The polypeptide is DNA polymerase zeta subunit 2 (Drosophila melanogaster (Fruit fly)).